Consider the following 86-residue polypeptide: Exodeoxyribonuclease 7 small subunit (86 aa).

Residues 1-26 (MQDELFETEKAPQKNTKNAKNAPKKS) form a disordered region.

Belongs to the XseB family. Heterooligomer composed of large and small subunits.

The protein localises to the cytoplasm. It carries out the reaction Exonucleolytic cleavage in either 5'- to 3'- or 3'- to 5'-direction to yield nucleoside 5'-phosphates.. In terms of biological role, bidirectionally degrades single-stranded DNA into large acid-insoluble oligonucleotides, which are then degraded further into small acid-soluble oligonucleotides. This Helicobacter pylori (strain HPAG1) protein is Exodeoxyribonuclease 7 small subunit.